Here is a 487-residue protein sequence, read N- to C-terminus: MAGILCLCGMMRLLTALFIPVLIASIGLCLVLVLLFICTRLWIQRKKKQSVEIGKDGKKKRVVAFFHPYCNAGGGGERVLWCALRSLQKRYKDAIYVIYTGDKDVSEEQILNGAAARFNIKLSHPVKFIFLEKRGLVEASFYPRFTLLGQSLGSVVLGWEALTKCVPDIYIDSMGYAFTLPLFKYVGGCQVGCYVHYPTISMDMLSVVRSQNARFNNAAFISNNPVLSRLKLIYYYLFAVIYGWVGSCSDVIMVNSTWTFAHILDLWKCSERTSIVYPPCDVQTFLDINLNQHKDIEEHSIVSIGQFRPEKDHPLQICAFAALLKKKTTEKLKLKLILIGGCRNNEDELRVSELKKLSSELGIPVEFKVNIPFAELKKHLSEATIGLHTMWNEHFGIGIVECMAAGTIILAHNSGGPKLDIVVPYEEHETGFLADSVESYAAAMDYILCLTPEQRLTIRQNARRSVARFSDQEFEANFLASSEPLFM.

Residues 1 to 16 (MAGILCLCGMMRLLTA) lie on the Lumenal side of the membrane. The chain crosses the membrane as a helical span at residues 17 to 37 (LFIPVLIASIGLCLVLVLLFI). Residues 38 to 231 (CTRLWIQRKK…SNNPVLSRLK (194 aa)) are Cytoplasmic-facing. An intramembrane region (helical) is located at residues 232–252 (LIYYYLFAVIYGWVGSCSDVI). The Cytoplasmic portion of the chain corresponds to 253-394 (MVNSTWTFAH…IGLHTMWNEH (142 aa)). Positions 395-415 (FGIGIVECMAAGTIILAHNSG) form an intramembrane region, helical. Topologically, residues 416–487 (GPKLDIVVPY…FLASSEPLFM (72 aa)) are cytoplasmic.

Belongs to the glycosyltransferase group 1 family. Glycosyltransferase 4 subfamily.

The protein localises to the endoplasmic reticulum membrane. The enzyme catalyses an alpha-D-Man-(1-&gt;3)-[alpha-D-Man-(1-&gt;6)]-beta-D-Man-(1-&gt;4)-beta-D-GlcNAc-(1-&gt;4)-alpha-D-GlcNAc-diphospho-di-trans,poly-cis-dolichol + 2 GDP-alpha-D-mannose = an alpha-D-Man-(1-&gt;2)-alpha-D-Man-(1-&gt;2)-alpha-D-Man-(1-&gt;3)-[alpha-D-Man-(1-&gt;6)]-beta-D-Man-(1-&gt;4)-beta-D-GlcNAc-(1-&gt;4)-alpha-D-GlcNAc-diphospho-di-trans,poly-cis-dolichol + 2 GDP + 2 H(+). It participates in protein modification; protein glycosylation. In terms of biological role, GDP-Man:Man(3)GlcNAc(2)-PP-Dol alpha-1,2-mannosyltransferase that operates in the biosynthetic pathway of dolichol-linked oligosaccharides, the glycan precursors employed in protein asparagine (N)-glycosylation. The assembly of dolichol-linked oligosaccharides begins on the cytosolic side of the endoplasmic reticulum membrane and finishes in its lumen. The sequential addition of sugars to dolichol pyrophosphate produces dolichol-linked oligosaccharides containing fourteen sugars, including two GlcNAcs, nine mannoses and three glucoses. Once assembled, the oligosaccharide is transferred from the lipid to nascent proteins by oligosaccharyltransferases. Catalyzes, on the cytoplasmic face of the endoplasmic reticulum, the addition of the fourth and fifth mannose residues to the dolichol-linked oligosaccharide chain, to produce Man(5)GlcNAc(2)-PP-dolichol core oligosaccharide. Man(5)GlcNAc(2)-PP-dolichol is a substrate for ALG3, the following enzyme in the biosynthetic pathway. In Xenopus tropicalis (Western clawed frog), this protein is GDP-Man:Man(3)GlcNAc(2)-PP-Dol alpha-1,2-mannosyltransferase (alg11).